Consider the following 111-residue polypeptide: Photosystem II reaction center Psb28 protein (111 aa).

The protein belongs to the Psb28 family. As to quaternary structure, part of the photosystem II complex.

It is found in the cellular thylakoid membrane. This is Photosystem II reaction center Psb28 protein from Crocosphaera subtropica (strain ATCC 51142 / BH68) (Cyanothece sp. (strain ATCC 51142)).